The sequence spans 333 residues: DNA-directed RNA polymerase subunit alpha (333 aa).

Residues 1–239 (MSAVLDKGSL…TQARCFLNIA (239 aa)) form an alpha N-terminal domain (alpha-NTD) region. An alpha C-terminal domain (alpha-CTD) region spans residues 259–333 (DASDLLSARI…SLGMNLDSHG (75 aa)).

The protein belongs to the RNA polymerase alpha chain family. In terms of assembly, homodimer. The RNAP catalytic core consists of 2 alpha, 1 beta, 1 beta' and 1 omega subunit. When a sigma factor is associated with the core the holoenzyme is formed, which can initiate transcription.

The catalysed reaction is RNA(n) + a ribonucleoside 5'-triphosphate = RNA(n+1) + diphosphate. Its function is as follows. DNA-dependent RNA polymerase catalyzes the transcription of DNA into RNA using the four ribonucleoside triphosphates as substrates. The chain is DNA-directed RNA polymerase subunit alpha from Neorickettsia sennetsu (strain ATCC VR-367 / Miyayama) (Ehrlichia sennetsu).